An 83-amino-acid polypeptide reads, in one-letter code: Bublin coiled-coil protein (83 aa).

Residues 1 to 25 form a disordered region; the sequence is MSGPNGDLGMPVDAGTEGENDSFGE. Positions 25–74 form a coiled coil; the sequence is EAEYAAINSMLDQINSCLDHLEEKNDHLHARLQELLESNRQTRLEFQQQL. Position 82 is a phosphoserine (Ser-82).

Belongs to the UPF0184 (EST00098) family.

The protein localises to the cell junction. The protein resides in the cytoplasm. Its subcellular location is the cytoskeleton. Functionally, essential for intermediate filament organization in intestinal cells, interacts with intermediate filament and regulates intestinal lumen morphology. This Mus musculus (Mouse) protein is Bublin coiled-coil protein.